Here is a 366-residue protein sequence, read N- to C-terminus: Putative [LysW]-aminoadipate semialdehyde/glutamate semialdehyde transaminase (366 aa).

Pyridoxal 5'-phosphate-binding positions include 90 to 91 (GT) and phenylalanine 117. Arginine 120 lines the substrate pocket. 202–205 (DEVQ) provides a ligand contact to pyridoxal 5'-phosphate. At lysine 230 the chain carries N6-(pyridoxal phosphate)lysine. Serine 254 contacts substrate. Threonine 255 lines the pyridoxal 5'-phosphate pocket.

The protein belongs to the class-III pyridoxal-phosphate-dependent aminotransferase family. LysJ subfamily. As to quaternary structure, homodimer. Requires pyridoxal 5'-phosphate as cofactor.

The protein localises to the cytoplasm. The catalysed reaction is [amino-group carrier protein]-C-terminal-gamma-(L-lysyl)-L-glutamate + 2-oxoglutarate = [amino-group carrier protein]-C-terminal-N-(1-carboxy-5-oxopentan-1-yl)-L-glutamine + L-glutamate. The enzyme catalyses [amino-group carrier protein]-C-terminal-gamma-(L-ornithyl)-L-glutamate + 2-oxoglutarate = [amino-group carrier protein]-C-terminal-gamma-(L-glutamyl-5-semialdehyde)-L-glutamate + L-glutamate. Its pathway is amino-acid biosynthesis; L-lysine biosynthesis via AAA pathway; L-lysine from L-alpha-aminoadipate (Thermus route): step 4/5. It functions in the pathway amino-acid biosynthesis; L-arginine biosynthesis. Its function is as follows. Involved in both the arginine and lysine biosynthetic pathways. The sequence is that of Putative [LysW]-aminoadipate semialdehyde/glutamate semialdehyde transaminase from Pyrococcus furiosus (strain ATCC 43587 / DSM 3638 / JCM 8422 / Vc1).